The primary structure comprises 291 residues: 2-C-methyl-D-erythritol 4-phosphate cytidylyltransferase (291 aa).

Positions 1-23 are disordered; it reads MTERDFDTPVETPTVQPAPAQGA.

It belongs to the IspD/TarI cytidylyltransferase family. IspD subfamily.

The catalysed reaction is 2-C-methyl-D-erythritol 4-phosphate + CTP + H(+) = 4-CDP-2-C-methyl-D-erythritol + diphosphate. The protein operates within isoprenoid biosynthesis; isopentenyl diphosphate biosynthesis via DXP pathway; isopentenyl diphosphate from 1-deoxy-D-xylulose 5-phosphate: step 2/6. Catalyzes the formation of 4-diphosphocytidyl-2-C-methyl-D-erythritol from CTP and 2-C-methyl-D-erythritol 4-phosphate (MEP). The protein is 2-C-methyl-D-erythritol 4-phosphate cytidylyltransferase of Bifidobacterium longum (strain NCC 2705).